The chain runs to 733 residues: MYVMSQTTNTEDTIDLKELFFSLIAQWKLIALCIILSLICALLYLRATPDTYSVNALVQVEENKGASAALLGDLSSMIEQKQPAQAEIEILKSRLVLGNVIQHLNLDLKISGTENSFTDRLLSPHHYQTEYQPKSVLFKDDEKVFDIRQFNIPASFRDKKIELRFKDGQFSLTNTQTEQVILTGKTNQSNTLRTADGLWNISIYTQDQLNDVYLIQKQSLPAAVNNILTNYSVAEKGKLTGILGLNYQGTDKTHITQVLNAILVSYSQQNIERRSAETAQTLKFLDEQLPELKQQLDVAEREFNKFRQQYNTVDVTKESELFLTQSVTLETQKAQLEQQVAEAGAKYTSEHPVMKQMNAQLGAINKKIGELNATLKELPDLQRRYLQLYREVEVKQQLYTALLNSYQQLRIAKAGEIGNVRIVDTAVEPIEPIAPKKLQILILSIFLGGFLGTLLALLRNMMRSGIKDSTQIENELDLPVYATVPRSPVQESRINILKKKKNIPILAVKNSDDIAIESLRSMRTAIHFALSSARNNLITISGPAPEVGKSFISTNLATILAQSDKRVLIIDADLRRGYLHKYFNLDTQPGLTELLNGQQSLETVIRHTEVPGLSVISRGKSPANPSELLSSNQFKNLLEQMSEKFDHVIIDTPPVLAVTDGIIISQYTGVNLVIARYAKTQMKELELTLNRFEQAGVKVNGFILNDIQRSSAGYGYGYGYNYAYAYKANKESD.

Transmembrane regions (helical) follow at residues 19 to 39 and 438 to 458; these read LFFS…LSLI and LQIL…LALL. Position 542 to 550 (542 to 550) interacts with ATP; that stretch reads GPAPEVGKS.

It belongs to the etk/wzc family. Mg(2+) serves as cofactor. Requires Mn(2+) as cofactor. Autophosphorylated on several Tyr residues. Dephosphorylated by ptp.

It is found in the cell inner membrane. It carries out the reaction L-tyrosyl-[protein] + ATP = O-phospho-L-tyrosyl-[protein] + ADP + H(+). It participates in glycan metabolism; exopolysaccharide biosynthesis. Its function is as follows. May be involved in the production and the transport of exopolysaccharides. This chain is Tyrosine-protein kinase ptk (ptk), found in Acinetobacter johnsonii.